Consider the following 166-residue polypeptide: PR-toxin biosynthesis cluster protein 10 (166 aa).

Part of the gene cluster that mediates the biosynthesis of PR-toxin, a bicyclic sesquiterpene belonging to the eremophilane class and acting as a mycotoxin. The first step of the pathway is catalyzed by the aristolochene synthase which performs the cyclization of trans,trans-farnesyl diphosphate (FPP) to the bicyclic sesquiterpene aristolochene. Following the formation of aristolochene, the non-oxygenated aristolochene is converted to the trioxygenated intermediate eremofortin B, via 7-epi-neopetasone. This conversion appears to involve three enzymes, a hydroxysterol oxidase-like enzyme, the quinone-oxidase prx3 that forms the quinone-type-structure in the bicyclic nucleus of aristolochene with the C8-oxo group and the C-3 hydroxyl group, and the P450 monooxygenase prx9 that introduces the epoxide at the double bond between carbons 1 and 2. No monoxy or dioxy-intermediates have been reported to be released to the broth, so these three early oxidative reactions may be coupled together. Eremofortin B is further oxidized by another P450 monooxygenase, that introduces a second epoxide between carbons 7 and 11 prior to acetylation to eremofortin A by the acetyltransferase prx11. The second epoxidation may be performed by a second P450 monooxygenase. After the acetylation step, eremofortin A is converted to eremofortin C and then to PR-toxin. First the conversion of eremofortin A to eremofortin C proceeds by oxidation of the side chain of the molecule at C-12 and is catalyzed by the short-chain oxidoreductase prx1. The cytochrome P450 monooxygenase prx8 also plays a role in this step. The primary alcohol formed at C-12 is finally oxidized by the short-chain alcohol dehydrogenase prx4 that forms PR-toxin. The chain is PR-toxin biosynthesis cluster protein 10 from Penicillium rubens (strain ATCC 28089 / DSM 1075 / NRRL 1951 / Wisconsin 54-1255) (Penicillium chrysogenum).